A 274-amino-acid polypeptide reads, in one-letter code: Protein RecA (274 aa).

43 to 50 (GPESSGKT) is an ATP binding site.

It belongs to the RecA family.

It is found in the cytoplasm. In terms of biological role, can catalyze the hydrolysis of ATP in the presence of single-stranded DNA, the ATP-dependent uptake of single-stranded DNA by duplex DNA, and the ATP-dependent hybridization of homologous single-stranded DNAs. It interacts with LexA causing its activation and leading to its autocatalytic cleavage. This Neisseria pharyngis protein is Protein RecA.